A 438-amino-acid polypeptide reads, in one-letter code: Indole diterpene prenyltransferase paxD (438 aa).

80–81 (FM) lines the L-tryptophan pocket. Substrate-binding residues include arginine 102, lysine 190, arginine 264, lysine 266, tyrosine 268, tyrosine 349, and tyrosine 418.

Belongs to the tryptophan dimethylallyltransferase family.

The protein operates within secondary metabolite biosynthesis. In terms of biological role, indole diterpene prenyltransferase; part of the gene cluster that mediates the biosynthesis of paxilline, a mycotoxin that acts as an inhibitor of mammalian maxi-K channels. PaxG, the geranylgeranyl diphosphate (GGPP) synthase is proposed to catalyze the first step in paxilline biosynthesis. Condensation of indole-3-glycerol phosphate with GGPP by paxC then forms 3-geranylgeranylindole (3-GGI), followed by epoxidation and cyclization of this intermediate (by paxM and paxB) to form paspaline. Paspaline is subsequently converted to 13-desoxypaxilline by paxP, the latter being then converted to paxilline by paxQ. Finally paxilline can be mono- and di-prenylated by paxD. In Penicillium paxilli, this protein is Indole diterpene prenyltransferase paxD.